The sequence spans 367 residues: tRNA-specific 2-thiouridylase MnmA (367 aa).

Residues 12 to 19 (GMSGGVDS) and Met-38 contribute to the ATP site. The segment at 98 to 100 (NPD) is interaction with target base in tRNA. The Nucleophile role is filled by Cys-103. A disulfide bond links Cys-103 and Cys-200. An ATP-binding site is contributed by Gly-128. Residues 150-152 (KDQ) form an interaction with tRNA region. The active-site Cysteine persulfide intermediate is Cys-200. The segment at 312 to 313 (RY) is interaction with tRNA.

It belongs to the MnmA/TRMU family. In terms of assembly, interacts with TusE.

The protein localises to the cytoplasm. The enzyme catalyses S-sulfanyl-L-cysteinyl-[protein] + uridine(34) in tRNA + AH2 + ATP = 2-thiouridine(34) in tRNA + L-cysteinyl-[protein] + A + AMP + diphosphate + H(+). Catalyzes the 2-thiolation of uridine at the wobble position (U34) of tRNA(Lys), tRNA(Glu) and tRNA(Gln), leading to the formation of s(2)U34, the first step of tRNA-mnm(5)s(2)U34 synthesis. Sulfur is provided by IscS, via a sulfur-relay system. Binds ATP and its substrate tRNAs. The protein is tRNA-specific 2-thiouridylase MnmA of Serratia proteamaculans (strain 568).